The following is an 825-amino-acid chain: NT-3 growth factor receptor (825 aa).

An N-terminal signal peptide occupies residues 1-31; the sequence is MDVSLCPAKCSFWRIFLLGSVWLDYVGSVLA. 2 disulfides stabilise this stretch: Cys32/Cys38 and Cys36/Cys45. Topologically, residues 32-429 are extracellular; it reads CPANCVCSKT…TVTHKPEEDT (398 aa). N-linked (GlcNAc...) asparagine glycosylation is found at Asn68, Asn72, and Asn79. LRR repeat units follow at residues 104–125 and 128–149; these read GLQKLTIKNSGLRSIQPRAFAK and HLRYINLSSNRLTTLSWQLFQT. N-linked (GlcNAc...) asparagine glycosylation is found at Asn133 and Asn163. Positions 160–209 constitute an LRRCT domain; the sequence is NFFNCSCDIRWMQLWQEQGEAKLNSQNLYCINTDGSQLPLFRMNISQCDL. 2 disulfide bridges follow: Cys164-Cys189 and Cys166-Cys207. Residues Asn203, Asn218, Asn232, Asn259, Asn267, Asn272, and Asn294 are each glycosylated (N-linked (GlcNAc...) asparagine). Ig-like C2-type domains are found at residues 210-300 and 309-382; these read PEIS…VALT and SLEE…IAKN. A disulfide bridge links Cys231 with Cys284. An intrachain disulfide couples Cys320 to Cys362. 2 N-linked (GlcNAc...) asparagine glycosylation sites follow: Asn375 and Asn388. A helical transmembrane segment spans residues 430–453; that stretch reads FGVSIAVGLAAFACVLLVVLFVMI. At 454 to 825 the chain is on the cytoplasmic side; sequence NKYGRRSKFG…ATPIYLDILG (372 aa). Ser493 bears the Phosphoserine mark. Tyr516 is modified (phosphotyrosine; by autocatalysis). The Protein kinase domain occupies 538 to 825; that stretch reads IVLKRELGEG…ATPIYLDILG (288 aa). ATP contacts are provided by residues 544 to 552 and Lys572; that span reads LGEGAFGKV. Asp679 acts as the Proton acceptor in catalysis. A phosphotyrosine; by autocatalysis mark is found at Tyr705, Tyr709, and Tyr710.

Belongs to the protein kinase superfamily. Tyr protein kinase family. Insulin receptor subfamily. In terms of assembly, exists in a dynamic equilibrium between monomeric (low affinity) and dimeric (high affinity) structures. Binds SH2B2. Interacts with SQSTM1 and KIDINS220. Interacts with PTPRS. Interacts with MAPK8IP3/JIP3. Post-translationally, ligand-mediated auto-phosphorylation.

Its subcellular location is the membrane. It carries out the reaction L-tyrosyl-[protein] + ATP = O-phospho-L-tyrosyl-[protein] + ADP + H(+). Its function is as follows. Receptor tyrosine kinase involved in nervous system and probably heart development. Upon binding of its ligand NTF3/neurotrophin-3, NTRK3 autophosphorylates and activates different signaling pathways, including the phosphatidylinositol 3-kinase/AKT and the MAPK pathways, that control cell survival and differentiation. This chain is NT-3 growth factor receptor (NTRK3), found in Pan troglodytes (Chimpanzee).